The sequence spans 176 residues: Endoribonuclease YbeY (176 aa).

Residues histidine 138, histidine 142, and histidine 148 each coordinate Zn(2+).

This sequence belongs to the endoribonuclease YbeY family. The cofactor is Zn(2+).

It localises to the cytoplasm. Functionally, single strand-specific metallo-endoribonuclease involved in late-stage 70S ribosome quality control and in maturation of the 3' terminus of the 16S rRNA. The protein is Endoribonuclease YbeY of Trichormus variabilis (strain ATCC 29413 / PCC 7937) (Anabaena variabilis).